We begin with the raw amino-acid sequence, 180 residues long: uncharacterized protein (180 aa).

This is an uncharacterized protein from Homo sapiens (Human).